Consider the following 103-residue polypeptide: Large ribosomal subunit protein bL21 (103 aa).

Belongs to the bacterial ribosomal protein bL21 family. Part of the 50S ribosomal subunit. Contacts protein L20.

Its function is as follows. This protein binds to 23S rRNA in the presence of protein L20. This chain is Large ribosomal subunit protein bL21, found in Yersinia pseudotuberculosis serotype O:1b (strain IP 31758).